The primary structure comprises 392 residues: MKNIFLTSESVTEGHPDKVCDQISDAILDAIIKEDKDARVACETCSTTGLVMVMGEITTTSYVDIRSIVRKTLAEIGYDNADYGIDARTCAIITSLEEQSKDIAQGVDESEEYKDNKSDEYDRYGAGDQGMVFGYATNETESGLPLPLELSHKLARRLATVRKEKILNYLRPDGKTQVTVEYENDAPKRIEAIVVSTQHDPDVDYEQLKEDIKREVILKIVDESMIDENTKFFINPTGKFVIGGPMGDAGLTGRKIIVDTYGGFCNHGGGAFSGKDPTKTDRSAAYFARYIAKNVVAAGLCDKCEVGFSYAIGVAKPISMFINTFGTNKIEEEKIIQAINENFDARPKAIIDKLDLQRPIYREVASYGHFGRNDLDLSWEKCDKAEALKKYL.

His-15 is a binding site for ATP. A Mg(2+)-binding site is contributed by Asp-17. Residue Glu-43 coordinates K(+). L-methionine-binding residues include Glu-56 and Gln-99. Residues 99–109 are flexible loop; that stretch reads QSKDIAQGVDE. ATP contacts are provided by residues 173 to 175, 239 to 240, Asp-248, 254 to 255, Ala-271, and Lys-275; these read DGK, KF, and RK. Asp-248 contacts L-methionine. Lys-279 is a binding site for L-methionine.

This sequence belongs to the AdoMet synthase family. In terms of assembly, homotetramer; dimer of dimers. The cofactor is Mg(2+). K(+) is required as a cofactor.

The protein resides in the cytoplasm. The enzyme catalyses L-methionine + ATP + H2O = S-adenosyl-L-methionine + phosphate + diphosphate. Its pathway is amino-acid biosynthesis; S-adenosyl-L-methionine biosynthesis; S-adenosyl-L-methionine from L-methionine: step 1/1. Catalyzes the formation of S-adenosylmethionine (AdoMet) from methionine and ATP. The overall synthetic reaction is composed of two sequential steps, AdoMet formation and the subsequent tripolyphosphate hydrolysis which occurs prior to release of AdoMet from the enzyme. The sequence is that of S-adenosylmethionine synthase from Finegoldia magna (strain ATCC 29328 / DSM 20472 / WAL 2508) (Peptostreptococcus magnus).